A 502-amino-acid chain; its full sequence is tRNA-specific adenosine deaminase 1 (502 aa).

The A to I editase domain occupies 63-501 (SMGTGTKCIG…IRNPPDYHQF (439 aa)). His-87 contacts Zn(2+). Glu-89 (proton donor) is an active-site residue. Residues Arg-93 and Arg-94 each contribute to the 1D-myo-inositol hexakisphosphate site. Cys-142 is a Zn(2+) binding site. The segment at 174-194 (SSNLEAPGNERKCEDPDSPVT) is disordered. The residue at position 191 (Ser-191) is a Phosphoserine. Zn(2+) is bound at residue Cys-299. 1D-myo-inositol hexakisphosphate is bound by residues Lys-302, Arg-305, Lys-435, and Lys-470.

The protein belongs to the ADAT1 family. The cofactor is 1D-myo-inositol hexakisphosphate. In terms of tissue distribution, ubiquitously expressed.

The enzyme catalyses adenosine(37) in tRNA(Ala) + H2O + H(+) = inosine(37) in tRNA(Ala) + NH4(+). Its function is as follows. Specifically deaminates adenosine-37 to inosine in tRNA-Ala. This is tRNA-specific adenosine deaminase 1 (ADAT1) from Homo sapiens (Human).